Here is a 398-residue protein sequence, read N- to C-terminus: Thyrotropin-releasing hormone receptor (398 aa).

Topologically, residues methionine 1 to threonine 28 are extracellular. Residues asparagine 3 and asparagine 10 are each glycosylated (N-linked (GlcNAc...) asparagine). A helical transmembrane segment spans residues isoleucine 29 to methionine 51. Residues arginine 52 to asparagine 61 are Cytoplasmic-facing. A helical membrane pass occupies residues cysteine 62 to isoleucine 83. Over threonine 84 to leucine 99 the chain is Extracellular. Cysteines 98 and 179 form a disulfide. Residues cysteine 100–isoleucine 121 form a helical membrane-spanning segment. Over glutamate 122 to lysine 144 the chain is Cytoplasmic. The helical transmembrane segment at isoleucine 145–isoleucine 168 threads the bilayer. The Extracellular segment spans residues serine 169 to leucine 193. The chain crosses the membrane as a helical span at residues methionine 194–alanine 215. Over arginine 216 to lysine 266 the chain is Cytoplasmic. Residues methionine 267 to valine 288 form a helical membrane-spanning segment. At asparagine 289–phenylalanine 296 the chain is on the extracellular side. A helical transmembrane segment spans residues glutamine 297 to isoleucine 319. Residues tyrosine 320–serine 398 are Cytoplasmic-facing.

The protein belongs to the G-protein coupled receptor 1 family.

The protein localises to the cell membrane. Functionally, receptor for thyrotropin-releasing hormone (TRH). Upon ligand binding, this G-protein-coupled receptor triggers activation of the phosphatidylinositol (IP3)-calcium-protein kinase C (PKC) pathway. The polypeptide is Thyrotropin-releasing hormone receptor (TRHR) (Bos taurus (Bovine)).